Consider the following 98-residue polypeptide: NADH-ubiquinone oxidoreductase chain 4L (98 aa).

Helical transmembrane passes span 1 to 21 (MALI…GLLL), 29 to 49 (SLLC…VMIL), and 61 to 81 (IVLL…LVMV).

This sequence belongs to the complex I subunit 4L family. As to quaternary structure, core subunit of respiratory chain NADH dehydrogenase (Complex I) which is composed of 45 different subunits.

The protein localises to the mitochondrion inner membrane. The catalysed reaction is a ubiquinone + NADH + 5 H(+)(in) = a ubiquinol + NAD(+) + 4 H(+)(out). In terms of biological role, core subunit of the mitochondrial membrane respiratory chain NADH dehydrogenase (Complex I) which catalyzes electron transfer from NADH through the respiratory chain, using ubiquinone as an electron acceptor. Part of the enzyme membrane arm which is embedded in the lipid bilayer and involved in proton translocation. The polypeptide is NADH-ubiquinone oxidoreductase chain 4L (MT-ND4L) (Rhinolophus monoceros (Formosan lesser horseshoe bat)).